The sequence spans 252 residues: Intraflagellar transport associated protein 2 (252 aa).

Residues 35 to 42 (GPPKAGKT) and 118 to 125 (WDVSGDKK) contribute to the GTP site.

Belongs to the small GTPase superfamily. Rab family. In terms of assembly, component of the IFT complex B composed of at least che-2, che-13, dyf-1, dyf-3, dyf-6, dyf-11, dyf-13, ift-20, ift-74, ift-81, ifta-2, osm-1, osm-5 and osm-6. Ciliated sensory neurons.

Its subcellular location is the cytoplasm. It localises to the cytoskeleton. The protein localises to the cilium axoneme. Its function is as follows. Component of the intraflagellar transport (IFT) complex B required for transport of proteins in the motile cilium. May be required for ciliary entrance and transport of specific ciliary cargo proteins such as che-3 which are related to motility. Regulates specific signaling activities in the cilia, such as the daf-2/insulin receptor-like transduction pathway. This Caenorhabditis elegans protein is Intraflagellar transport associated protein 2.